The primary structure comprises 186 residues: Small ribosomal subunit protein uS19 (186 aa).

Residues 1-95 (MREAIKRYGS…YEELYAQYKQ (95 aa)) are unknown. The interval 96–186 (MTEKKAYVDP…EKTAKVVKKK (91 aa)) is small ribosomal subunit protein uS19.

It belongs to the universal ribosomal protein uS19 family.

Protein S19 forms a complex with S13 that binds strongly to the 16S ribosomal RNA. The polypeptide is Small ribosomal subunit protein uS19 (Aquifex aeolicus (strain VF5)).